We begin with the raw amino-acid sequence, 579 residues long: Vitamin B6 transporter TPN1 (579 aa).

A run of 12 helical transmembrane segments spans residues threonine 99–phenylalanine 119, leucine 123–methionine 143, leucine 158–tryptophan 178, proline 199–isoleucine 219, valine 222–isoleucine 242, leucine 275–proline 295, isoleucine 303–leucine 323, valine 363–phenylalanine 383, isoleucine 395–glycine 415, isoleucine 422–phenylalanine 442, phenylalanine 520–glycine 540, and phenylalanine 546–tyrosine 566.

Belongs to the purine-cytosine permease (2.A.39) family.

Its subcellular location is the membrane. In terms of biological role, thiamine-regulated, high affinity import carrier of pyridoxine, pyridoxal and pyridoxamine. The chain is Vitamin B6 transporter TPN1 (TPN1) from Saccharomyces cerevisiae (Baker's yeast).